We begin with the raw amino-acid sequence, 148 residues long: Angiogenin-1 (148 aa).

Residues 1–23 form the signal peptide; it reads MVMVLSPLLLVFILGLGLTPVAP. The active-site Proton acceptor is histidine 37. Arginine 45 lines the tRNA pocket. 3 disulfide bridges follow: cysteine 50–cysteine 105, cysteine 63–cysteine 116, and cysteine 81–cysteine 131. A Nucleolar localization signal motif is present at residues 55 to 59; that stretch reads KNRRL. Positions 105 and 127 each coordinate tRNA. Histidine 138 functions as the Proton donor in the catalytic mechanism.

The protein belongs to the pancreatic ribonuclease family. In terms of assembly, homodimer. Interacts with RNH1; inhibiting ANG ribonuclease activity. In terms of tissue distribution, serum and milk.

It is found in the secreted. Its subcellular location is the nucleus. The protein resides in the nucleolus. It localises to the cytoplasm. The protein localises to the stress granule. In terms of biological role, secreted ribonuclease that can either promote or restrict cell proliferation of target cells, depending on the context. Endocytosed in target cells via its receptor PLXNB2 and translocates to the cytoplasm or nucleus. Under stress conditions, localizes to the cytoplasm and promotes the assembly of stress granules (SGs): specifically cleaves a subset of tRNAs within anticodon loops to produce tRNA-derived stress-induced fragments (tiRNAs), resulting in translation repression and inhibition of cell proliferation. tiRNas also prevent formation of apoptosome, thereby promoting cell survival. Preferentially cleaves RNAs between a pyrimidine and an adenosine residue, suggesting that it cleaves the anticodon loop of tRNA(Ala) (32-UUAGCAU-38) after positions 33 and 36. Cleaves a subset of tRNAs, including tRNA(Ala), tRNA(Glu), tRNA(Gly), tRNA(Lys), tRNA(Val), tRNA(His), tRNA(Asp) and tRNA(Sec). Under growth conditions and in differentiated cells, translocates to the nucleus and stimulates ribosomal RNA (rRNA) transcription, including that containing the initiation site sequences of 45S rRNA, thereby promoting cell growth and proliferation. Angiogenin induces vascularization of normal and malignant tissues via its ability to promote rRNA transcription. This is Angiogenin-1 (ANG1) from Bos taurus (Bovine).